A 365-amino-acid polypeptide reads, in one-letter code: Histidinol-phosphate aminotransferase 2 (365 aa).

An N6-(pyridoxal phosphate)lysine modification is found at K226.

It belongs to the class-II pyridoxal-phosphate-dependent aminotransferase family. Histidinol-phosphate aminotransferase subfamily. In terms of assembly, homodimer. The cofactor is pyridoxal 5'-phosphate.

The catalysed reaction is L-histidinol phosphate + 2-oxoglutarate = 3-(imidazol-4-yl)-2-oxopropyl phosphate + L-glutamate. It participates in amino-acid biosynthesis; L-histidine biosynthesis; L-histidine from 5-phospho-alpha-D-ribose 1-diphosphate: step 7/9. The sequence is that of Histidinol-phosphate aminotransferase 2 (hisC2) from Pasteurella multocida (strain Pm70).